The primary structure comprises 249 residues: Tetrahydromethanopterin S-methyltransferase subunit D (249 aa).

The next 6 membrane-spanning stretches (helical) occupy residues 9–29 (ILWLVFIIIGGVLISWSVHFV), 47–67 (GTVQLAAGAGLTGLVSAGFMM), 75–95 (LILASGAVGAMIMISVTMIVG), 138–158 (VSFVSGVIGGLLGGIGGALVY), 183–203 (LVGIAAMFAIGIFFVNAVIPS), and 224–244 (AVISSFVATILCAIVAVIAIS).

This sequence belongs to the MtrD family. As to quaternary structure, the complex is composed of 8 subunits; MtrA, MtrB, MtrC, MtrD, MtrE, MtrF, MtrG and MtrH.

The protein localises to the cell membrane. The enzyme catalyses 5-methyl-5,6,7,8-tetrahydromethanopterin + coenzyme M + 2 Na(+)(in) = 5,6,7,8-tetrahydromethanopterin + methyl-coenzyme M + 2 Na(+)(out). Its pathway is one-carbon metabolism; methanogenesis from CO(2); methyl-coenzyme M from 5,10-methylene-5,6,7,8-tetrahydromethanopterin: step 2/2. Functionally, part of a complex that catalyzes the formation of methyl-coenzyme M and tetrahydromethanopterin from coenzyme M and methyl-tetrahydromethanopterin. This is an energy-conserving, sodium-ion translocating step. The chain is Tetrahydromethanopterin S-methyltransferase subunit D from Methanosarcina acetivorans (strain ATCC 35395 / DSM 2834 / JCM 12185 / C2A).